The primary structure comprises 193 residues: Holliday junction branch migration complex subunit RuvA (193 aa).

The interval 1-64 (MIGRIAGILL…EDAHLLYGFL (64 aa)) is domain I. Residues 65 to 139 (TPQERTTFRE…GKLGADLGAL (75 aa)) are domain II. Positions 139–143 (LAGAA) are flexible linker. The segment at 144–193 (SPSDHAADILNALVALGYSEKEGLAAIKNVPAGTGVSDGIKLALKALSKA) is domain III.

The protein belongs to the RuvA family. In terms of assembly, homotetramer. Forms an RuvA(8)-RuvB(12)-Holliday junction (HJ) complex. HJ DNA is sandwiched between 2 RuvA tetramers; dsDNA enters through RuvA and exits via RuvB. An RuvB hexamer assembles on each DNA strand where it exits the tetramer. Each RuvB hexamer is contacted by two RuvA subunits (via domain III) on 2 adjacent RuvB subunits; this complex drives branch migration. In the full resolvosome a probable DNA-RuvA(4)-RuvB(12)-RuvC(2) complex forms which resolves the HJ.

The protein resides in the cytoplasm. The RuvA-RuvB-RuvC complex processes Holliday junction (HJ) DNA during genetic recombination and DNA repair, while the RuvA-RuvB complex plays an important role in the rescue of blocked DNA replication forks via replication fork reversal (RFR). RuvA specifically binds to HJ cruciform DNA, conferring on it an open structure. The RuvB hexamer acts as an ATP-dependent pump, pulling dsDNA into and through the RuvAB complex. HJ branch migration allows RuvC to scan DNA until it finds its consensus sequence, where it cleaves and resolves the cruciform DNA. This chain is Holliday junction branch migration complex subunit RuvA, found in Burkholderia vietnamiensis (strain G4 / LMG 22486) (Burkholderia cepacia (strain R1808)).